Reading from the N-terminus, the 75-residue chain is UPF0270 protein Avin_35000 (75 aa).

The protein belongs to the UPF0270 family.

The polypeptide is UPF0270 protein Avin_35000 (Azotobacter vinelandii (strain DJ / ATCC BAA-1303)).